A 301-amino-acid polypeptide reads, in one-letter code: HTH-type transcriptional regulator AbaB (301 aa).

An HTH lysR-type domain is found at 1–58 (MDLALLRTFVTVHRAGSFTRAAALLGLSQPAVTSQIRTLERQLGRPLFLRQARGVTPT). The H-T-H motif DNA-binding region spans 18 to 37 (FTRAAALLGLSQPAVTSQIR).

It belongs to the LysR transcriptional regulatory family.

In terms of biological role, putative regulator that may be involved in stimulating antibiotic production in S.antibioticus. The polypeptide is HTH-type transcriptional regulator AbaB (Streptomyces antibioticus).